The chain runs to 143 residues: Calcitonin (143 aa).

An N-terminal signal peptide occupies residues 1-25; sequence MGFGKSSPFLAFSILVLCQAGSLQA. Residues 26–84 constitute a propeptide that is removed on maturation; that stretch reads TPLRSALETLPDPGALSEKEGRLLLAALVKAYVQRKTNELEQEEEQEETEDSSLDSSRA. Serine 42 carries the phosphoserine modification. The tract at residues 62–86 is disordered; it reads TNELEQEEEQEETEDSSLDSSRAKR. The segment covering 65-78 has biased composition (acidic residues); that stretch reads LEQEEEQEETEDSS. The cysteines at positions 87 and 93 are disulfide-linked. The disordered stretch occupies residues 112–143; that stretch reads GFGPETPGKKRDIANSLEKDLSSHFGVPTDAN. A Proline amide modification is found at proline 118. Basic and acidic residues predominate over residues 118–133; it reads PGKKRDIANSLEKDLS. Residues 122 to 143 constitute a propeptide that is removed on maturation; sequence RDIANSLEKDLSSHFGVPTDAN.

This sequence belongs to the calcitonin family.

Its subcellular location is the secreted. Calcitonin is a peptide hormone that causes a rapid but short-lived drop in the level of calcium and phosphate in blood by promoting the incorporation of those ions in the bones. Calcitonin function is mediated by the calcitonin receptor/CALCR and the CALCR-RAMP2 (AMYR2) receptor complex. This chain is Calcitonin (CALCA), found in Ovis aries (Sheep).